Here is a 251-residue protein sequence, read N- to C-terminus: MKILIILSIILCSLFGRADLEYVDNDIYTYNGGRNENGCLEVYDPYEKFNRKVFAFNSVLDYIIFRPLAVGYKNITNDYIKARVNSFISNVYTPLTVVNYGLQLNYDKTMKSVWRFLINTTLGIGGLFDVASKVGLQSDRQTFGSTLAHYGVAPGPYLVLPIIGSTNARDMTDSVITNYAINPLMYYTHNDFDLWILAVSKITDRYIVLPFSDYVMKNSTDPYVAIRSALHRAREASVQYPENFKCPKPKN.

The N-terminal stretch at 1–18 is a signal peptide; the sequence is MKILIILSIILCSLFGRA.

This sequence belongs to the MlaA family.

This is an uncharacterized protein from Rickettsia prowazekii (strain Madrid E).